The sequence spans 695 residues: MATFILEIGTEELPARFLLELQSELGVRFLDSLQSMGYRPTEVSDYSTPRRLVVCIKGLDMIQPHCEEVVIGPPINIAFDKDGNPTKAAEGFAKNLGITIGSLSQISTDRGEYISGLKVKGGIPTKEVLARLCPEIITALPLPKRMRWGNNPFTFIRPIRWIMALLDSDIVPFELAGIHSNRNTVGLRNNNVPFIEVPSSTDYYMLLKEVGNVILDPNSRKDSILQLGNKEAQLIGGVVNWNERLLNEVIGLVEHPYPLLGTINSVFLNLPREVLLTSIETHQKSFGILDSQGNLLPYFLTVLNMTPPDLALVKQGWERVLQARLEDARFFWNEDINSSFDEWQEKLTHLIFLDPLGSIAQKEHRVSLLCEWIAKYIPTSNAEEARKAGSLSKVDLVSKMVEEFPELQGVMGGIYARHKGESESIATAIAEQYLPSGPDTDVPVTDLGAILSIADKIDTLVGCFGCGIIPTGTADPYGLRRCALGIIRILIEKEYPINLHQLYTRAQDNFVNVSWKLAPEDVLQKLHEFIIARLKNYFLALGYDTLVVEAIVSTQTSQLWSIKDRLDSFILLSQHEDFSQLVQTIKRVINIIKKQDKETEIVLTGHWNPSLFKDTAEKVLAEKLMIAVNKFNQESQTASLPVFMMLLKLQPAINTFFDQVMIMSNDIEVRRNRLNLLKALLLYIESLADFSVLQI.

The protein belongs to the class-II aminoacyl-tRNA synthetase family. Tetramer of two alpha and two beta subunits.

It localises to the cytoplasm. The catalysed reaction is tRNA(Gly) + glycine + ATP = glycyl-tRNA(Gly) + AMP + diphosphate. The sequence is that of Glycine--tRNA ligase beta subunit from Lawsonia intracellularis (strain PHE/MN1-00).